Reading from the N-terminus, the 507-residue chain is FSD1-like protein (507 aa).

Residues 70-109 are a coiled coil; that stretch reads KQEQVRKSQELQSQLSQCNNALENSEELLEFATRSLDIKE. One can recognise a COS domain in the interval 105–162; that stretch reads LDIKEPEEFSKAARQIKDRVTMASAFRLSLKPKVSDNMTHLMVDFSQERQMLQTLKFL. Residues 164 to 268 form the Fibronectin type-III domain; that stretch reads VPKAPEIDPV…DPVTLETRAL (105 aa). The 194-residue stretch at 291-484 folds into the B30.2/SPRY domain; sequence DPTGGKGQES…LSTGMQVPSA (194 aa). The interval 292–345 is disordered; it reads PTGGKGQESKIKGKENKGSVHVTSLKKHTSGTPSPKRTSVGSRPPAVRGSRDRF. Basic and acidic residues predominate over residues 298–309; sequence QESKIKGKENKG. Positions 321–332 are enriched in polar residues; sequence SGTPSPKRTSVG. Residues Ser-498 and Ser-501 each carry the phosphoserine modification.

The polypeptide is FSD1-like protein (Fsd1l) (Mus musculus (Mouse)).